Reading from the N-terminus, the 114-residue chain is Histone H3-6 (114 aa).

Over residues 1–17 the composition is skewed to basic residues; sequence NTGGKAPRKHIAHKQAK. The disordered stretch occupies residues 1 to 32; sequence NTGGKAPRKHIAHKQAKKSSAAAATGGVKKPH. Residues 18–28 are compositionally biased toward low complexity; it reads KSSAAAATGGV.

The protein belongs to the histone H3 family. The nucleosome is a histone octamer containing two molecules each of H2A, H2B, H3 and H4 assembled in one H3-H4 heterotetramer and two H2A-H2B heterodimers. The octamer wraps approximately 147 bp of DNA.

The protein localises to the nucleus. The protein resides in the chromosome. Functionally, core component of nucleosome. Nucleosomes wrap and compact DNA into chromatin, limiting DNA accessibility to the cellular machineries which require DNA as a template. Histones thereby play a central role in transcription regulation, DNA repair, DNA replication and chromosomal stability. DNA accessibility is regulated via a complex set of post-translational modifications of histones, also called histone code, and nucleosome remodeling. In Stylonychia lemnae (Ciliate), this protein is Histone H3-6 (H3-6).